The sequence spans 254 residues: PF03932 family protein CutC (254 aa).

It belongs to the CutC family.

The protein localises to the cytoplasm. The protein is PF03932 family protein CutC of Yersinia pestis bv. Antiqua (strain Antiqua).